Here is a 193-residue protein sequence, read N- to C-terminus: Acyl carrier protein phosphodiesterase (193 aa).

Belongs to the AcpH family.

It catalyses the reaction holo-[ACP] + H2O = apo-[ACP] + (R)-4'-phosphopantetheine + H(+). Its function is as follows. Converts holo-ACP to apo-ACP by hydrolytic cleavage of the phosphopantetheine prosthetic group from ACP. This Shigella boydii serotype 18 (strain CDC 3083-94 / BS512) protein is Acyl carrier protein phosphodiesterase.